Reading from the N-terminus, the 185-residue chain is Ribosome-recycling factor (185 aa).

It belongs to the RRF family.

The protein localises to the cytoplasm. Functionally, responsible for the release of ribosomes from messenger RNA at the termination of protein biosynthesis. May increase the efficiency of translation by recycling ribosomes from one round of translation to another. This is Ribosome-recycling factor from Proteus mirabilis (strain HI4320).